The following is a 102-amino-acid chain: Vesicle-associated membrane protein 5 (102 aa).

Topologically, residues 1–72 (MAGKELERCQ…RWENIRCRVY (72 aa)) are cytoplasmic. The v-SNARE coiled-coil homology domain occupies 5–65 (ELERCQRQAD…KTLAQQKRWE (61 aa)). Residues Ser41, Ser48, and Ser49 each carry the phosphoserine modification. Residues 73–93 (LGLAVAGGLLLILVVLLVIFL) form a helical; Anchor for type IV membrane protein membrane-spanning segment. Residues 94–102 (PSGEDSSKP) lie on the Vesicular side of the membrane.

It belongs to the synaptobrevin family.

It is found in the cell membrane. Its subcellular location is the endomembrane system. The protein localises to the golgi apparatus. It localises to the trans-Golgi network membrane. In terms of biological role, may participate in trafficking events that are associated with myogenesis, such as myoblast fusion and/or GLUT4 trafficking. This Rattus norvegicus (Rat) protein is Vesicle-associated membrane protein 5 (Vamp5).